Here is a 616-residue protein sequence, read N- to C-terminus: Probable galacturonosyltransferase 4 (616 aa).

The Cytoplasmic portion of the chain corresponds to 1-6; sequence MMVKLR. The chain crosses the membrane as a helical; Signal-anchor for type II membrane protein span at residues 7–29; sequence NLVLFFMLLTVVAHILLYTDPAA. The Lumenal portion of the chain corresponds to 30–616; the sequence is SFKTPFSKRD…VYLRECNINP (587 aa). The interval 132-152 is disordered; sequence QTSEKVDEQPEPNAFGAKKDT. N-linked (GlcNAc...) asparagine glycans are attached at residues asparagine 291, asparagine 326, asparagine 378, asparagine 481, and asparagine 514.

The protein belongs to the glycosyltransferase 8 family. In terms of tissue distribution, expressed in roots, inflorescences, siliques, leaves and stems.

The protein resides in the golgi apparatus membrane. Its pathway is glycan metabolism; pectin biosynthesis. May be involved in pectin and/or xylans biosynthesis in cell walls. This chain is Probable galacturonosyltransferase 4 (GAUT4), found in Arabidopsis thaliana (Mouse-ear cress).